Reading from the N-terminus, the 62-residue chain is Photosystem II reaction center protein Z (62 aa).

The next 2 membrane-spanning stretches (helical) occupy residues 8 to 28 (ALISLVLVSFVLVVGVPVAYA) and 41 to 61 (WLGSGVWIALVLLVGLLNFFV).

This sequence belongs to the PsbZ family. In terms of assembly, PSII is composed of 1 copy each of membrane proteins PsbA, PsbB, PsbC, PsbD, PsbE, PsbF, PsbH, PsbI, PsbJ, PsbK, PsbL, PsbM, PsbT, PsbX, PsbY, PsbZ, Psb30/Ycf12, peripheral proteins PsbO, CyanoQ (PsbQ), PsbU, PsbV and a large number of cofactors. It forms dimeric complexes.

It is found in the cellular thylakoid membrane. In terms of biological role, may control the interaction of photosystem II (PSII) cores with the light-harvesting antenna, regulates electron flow through the 2 photosystem reaction centers. PSII is a light-driven water plastoquinone oxidoreductase, using light energy to abstract electrons from H(2)O, generating a proton gradient subsequently used for ATP formation. The sequence is that of Photosystem II reaction center protein Z from Trichormus variabilis (strain ATCC 29413 / PCC 7937) (Anabaena variabilis).